We begin with the raw amino-acid sequence, 320 residues long: Protein TsetseEP (320 aa).

The N-terminal stretch at methionine 1–alanine 19 is a signal peptide. The tract at residues glycine 192–phenylalanine 320 is disordered. Positions proline 194–proline 308 are enriched in acidic residues. The 59 X 2 AA tandem repeats of P-E stretch occupies residues proline 194–glutamate 311.

Expressed in the gut, but not salivary glands, of female and male flies (at protein level). Present in vesicles in midgut cells and in the lumen of the gut.

It is found in the secreted. The sequence is that of Protein TsetseEP from Glossina morsitans morsitans (Savannah tsetse fly).